Consider the following 748-residue polypeptide: Antigen peptide transporter 1 (748 aa).

Residues Met-1–Leu-15 lie on the Cytoplasmic side of the membrane. A helical membrane pass occupies residues Pro-16–Leu-36. Over Arg-37–Pro-53 the chain is Lumenal. Residues Leu-54–Leu-76 form a helical membrane-spanning segment. Residues Arg-77–Trp-92 lie on the Cytoplasmic side of the membrane. Residues Leu-93–Phe-113 traverse the membrane as a helical segment. Topologically, residues Arg-114–Trp-133 are lumenal. Residues Gly-134 to Trp-154 form a helical membrane-spanning segment. Residues His-155 to Arg-186 are Cytoplasmic-facing. Residues Leu-187–Phe-207 traverse the membrane as a helical segment. An ABC transmembrane type-1 domain is found at Leu-187–Lys-470. The Lumenal segment spans residues Thr-208–Asn-227. The helical transmembrane segment at Leu-228–Ile-248 threads the bilayer. Residues Tyr-249–Ser-298 are Cytoplasmic-facing. A helical transmembrane segment spans residues Leu-299–Ile-319. The Lumenal segment spans residues Met-320–Thr-328. The chain crosses the membrane as a helical span at residues Met-329 to Tyr-349. Over Gln-350 to Ser-418 the chain is Cytoplasmic. Residues Pro-375–Met-420 are part of the peptide-binding site. The chain crosses the membrane as a helical span at residues Gly-419 to Val-439. Over Ser-440–Asn-443 the chain is Lumenal. The chain crosses the membrane as a helical span at residues Leu-444–Ile-464. Positions Gln-453–Arg-487 are part of the peptide-binding site. The Cytoplasmic portion of the chain corresponds to Tyr-465 to Glu-748. The region spanning Val-503–Ala-742 is the ABC transporter domain. Residues Gly-538–Thr-546, Ser-641–Gln-647, and Gln-701 each bind ATP. Ser-545 is a Mg(2+) binding site.

It belongs to the ABC transporter superfamily. ABCB family. MHC peptide exporter (TC 3.A.1.209) subfamily. In terms of assembly, heterodimer of TAP1 and TAP2 (TAP1-TAP2). A component of the peptide loading complex (PLC), interacts via TAPBP with MHCI heterodimer; this interaction mediates peptide-MHCI assembly. Interacts with PSMB5 and PSMB8. Requires Mg(2+) as cofactor.

The protein resides in the endoplasmic reticulum membrane. The enzyme catalyses a peptide antigen(in) + ATP + H2O = a peptide antigen(out) + ADP + phosphate + H(+). Its function is as follows. ABC transporter associated with antigen processing. In complex with TAP2 mediates unidirectional translocation of peptide antigens from cytosol to endoplasmic reticulum (ER) for loading onto MHC class I (MHCI) molecules. Uses the chemical energy of ATP to export peptides against the concentration gradient. During the transport cycle alternates between 'inward-facing' state with peptide binding site facing the cytosol to 'outward-facing' state with peptide binding site facing the ER lumen. Peptide antigen binding to ATP-loaded TAP1-TAP2 induces a switch to hydrolysis-competent 'outward-facing' conformation ready for peptide loading onto nascent MHCI molecules. Subsequently ATP hydrolysis resets the transporter to the 'inward facing' state for a new cycle. As a component of the peptide loading complex (PLC), acts as a molecular scaffold essential for peptide-MHCI assembly and antigen presentation. The protein is Antigen peptide transporter 1 (TAP1) of Gorilla gorilla gorilla (Western lowland gorilla).